A 1027-amino-acid polypeptide reads, in one-letter code: Contactin-5 (1027 aa).

The signal sequence occupies residues 1–19 (MMWLSWKLFLFLSLIGCLS). Ig-like C2-type domains follow at residues 32–117 (PDDV…AVLQ), 123–209 (NFSG…RVLS), 227–307 (PKIE…RNVF), 317–401 (PQWV…AELK), 407–494 (PTFP…ASVS), and 498–593 (PTRI…TELL). A disulfide bond links Cys-50 and Cys-100. Residues Asn-65 and Asn-123 are each glycosylated (N-linked (GlcNAc...) asparagine). Cystine bridges form between Cys-144-Cys-196 and Cys-249-Cys-296. Residues Asn-324, Asn-376, and Asn-467 are each glycosylated (N-linked (GlcNAc...) asparagine). Disulfide bonds link Cys-338-Cys-385, Cys-430-Cys-478, and Cys-520-Cys-577. Fibronectin type-III domains follow at residues 600 to 698 (PPGV…TNEA), 703 to 800 (PPAN…SAEG), 805 to 899 (APID…TKKS), and 901 to 994 (PSQA…SYAG). Asn-706, Asn-743, Asn-858, and Asn-929 each carry an N-linked (GlcNAc...) asparagine glycan. Ser-999 carries the GPI-anchor amidated serine lipid modification. Positions 1000–1027 (AQSTLHMFSTSSSSVTLLLVLMVPSTSW) are cleaved as a propeptide — removed in mature form.

This sequence belongs to the immunoglobulin superfamily. Contactin family. As to quaternary structure, interacts with INgCAM/L1 and the tenascin-R TNP protein. Does not interacts with NrCAM. As to expression, expressed by subpopulations of Purkinje cells in the cerebellum. Also expressed by one type of Purkinje cell afferents, the climbing fibers.

It localises to the cell membrane. Functionally, contactins mediate cell surface interactions during nervous system development. May contribute to the formation of somatotopic maps of cerebellar afferents during the development of the nervous system. The chain is Contactin-5 (CNTN5) from Gallus gallus (Chicken).